A 292-amino-acid chain; its full sequence is ATP-dependent Clp protease proteolytic subunit 4, chloroplastic (292 aa).

A chloroplast-targeting transit peptide spans 1–65 (MGTLSLSSSL…LRFANASIEM (65 aa)). N-acetylserine is present on Ser66. Ser158 acts as the Nucleophile in catalysis. The active site involves His183.

This sequence belongs to the peptidase S14 family. As to quaternary structure, component of the chloroplastic Clp protease core complex which consist of at least 16 proteins: CLPP4 (3 copies), CLPP5 (3 copies), CLPR4 (2 copies), ClpP1 (1 copy), CLPP6 (1 copy), CLPR2 (1 copy), CLPT1 (1 copy), CLPT2 (1 copy) and 3 copies of CLPP3 and/or CLPR1 and/or CLPR3. Interacts with CHIP. The core complex is organized in two heptameric rings, one containing CLPP3,4,5,6 in a 1:2:3:1 ratio and the other CLPP1 and CLPR1,2,3,4 in a 3:1:1:1:1 ratio. In terms of processing, ubiquitinated by CHIP. As to expression, mostly expressed in leaves. Also detected in stems, and to a lower extent, in roots (at protein level).

It is found in the plastid. The protein localises to the chloroplast stroma. It catalyses the reaction Hydrolysis of proteins to small peptides in the presence of ATP and magnesium. alpha-casein is the usual test substrate. In the absence of ATP, only oligopeptides shorter than five residues are hydrolyzed (such as succinyl-Leu-Tyr-|-NHMec, and Leu-Tyr-Leu-|-Tyr-Trp, in which cleavage of the -Tyr-|-Leu- and -Tyr-|-Trp bonds also occurs).. Cleaves peptides in various proteins in a process that requires ATP hydrolysis. Has a chymotrypsin-like activity. Plays a major role in the degradation of misfolded proteins. Essential protein required for chloroplast development and integrity. Essential for Embryogenesis. This chain is ATP-dependent Clp protease proteolytic subunit 4, chloroplastic, found in Arabidopsis thaliana (Mouse-ear cress).